Consider the following 537-residue polypeptide: Membrane protein insertase YidC (537 aa).

5 helical membrane-spanning segments follow: residues 6-26 (SLLA…WEID), 341-363 (LVSN…LYPL), 411-431 (LGGC…YWTF), 449-469 (LSAQ…MFLL), and 490-510 (PVIF…YWLV).

It belongs to the OXA1/ALB3/YidC family. Type 1 subfamily. Interacts with the Sec translocase complex via SecD. Specifically interacts with transmembrane segments of nascent integral membrane proteins during membrane integration.

The protein localises to the cell inner membrane. In terms of biological role, required for the insertion and/or proper folding and/or complex formation of integral membrane proteins into the membrane. Involved in integration of membrane proteins that insert both dependently and independently of the Sec translocase complex, as well as at least some lipoproteins. Aids folding of multispanning membrane proteins. This chain is Membrane protein insertase YidC, found in Actinobacillus succinogenes (strain ATCC 55618 / DSM 22257 / CCUG 43843 / 130Z).